Here is a 66-residue protein sequence, read N- to C-terminus: Dermaseptin PD-3-7 (66 aa).

An N-terminal signal peptide occupies residues 1–22 (MSFMKKSLLLVLFLGVVSLSNC). A propeptide spanning residues 23–40 (EEEKGENENEDHEEHHEE) is cleaved from the precursor.

In terms of tissue distribution, expressed by the skin glands.

It localises to the secreted. Possesses a potent antimicrobial activity against Gram-positive and Gram-negative bacteria. Probably acts by disturbing membrane functions with its amphipathic structure. The sequence is that of Dermaseptin PD-3-7 from Agalychnis dacnicolor (Giant Mexican leaf frog).